A 616-amino-acid polypeptide reads, in one-letter code: Sodium- and chloride-dependent transporter XTRP3 (616 aa).

Residues 1–11 (MRLAIKRRASR) are compositionally biased toward basic residues. Positions 1–26 (MRLAIKRRASRGQRPGPDEKRARDME) are disordered. The Cytoplasmic portion of the chain corresponds to 1–37 (MRLAIKRRASRGQRPGPDEKRARDMEKARPQWGNPLQ). Basic and acidic residues predominate over residues 16-26 (GPDEKRARDME). The helical transmembrane segment at 38-58 (FVFACISYAVGLGNVWRFPYL) threads the bilayer. Residues 59 to 66 (CQMYGGGS) lie on the Extracellular side of the membrane. The helical transmembrane segment at 67 to 87 (FLVPYLIMLIVEGMPLLYLEL) threads the bilayer. The Cytoplasmic segment spans residues 88–103 (AVGQRMRQGSIGAWRT). The helical transmembrane segment at 104–124 (ISPYLSGVGVASVVVSFFLSM) threads the bilayer. Over 125-189 (YYNVINAWGF…ISPSIQENGG (65 aa)) the chain is Extracellular. The N-linked (GlcNAc...) asparagine glycan is linked to asparagine 155. A helical membrane pass occupies residues 190-210 (VQWEPALCLTLAWLMVYLCIL). Residues 211–218 (RGTESTGK) are Cytoplasmic-facing. A helical transmembrane segment spans residues 219–239 (VVYFTALMPYCVLIIYLVRGL). At 240–265 (TLHGATNGLMYMFTPKIEQLANPKAW) the chain is on the extracellular side. The helical transmembrane segment at 266 to 286 (INAATQIFFSLGLGFGSLIAF) threads the bilayer. At 287–300 (ASYNEPSNDCQKHA) the chain is on the cytoplasmic side. The chain crosses the membrane as a helical span at residues 301–321 (VIVSVINSSTSIFASIVTFSI). At 322 to 413 (YGFKATFNYE…EAIKNMEVSQ (92 aa)) the chain is on the extracellular side. Asparagine 381 carries an N-linked (GlcNAc...) asparagine glycan. A helical membrane pass occupies residues 414-434 (LWSVLYFFMLLMLGMGSMLGN). Residues 435 to 455 (TAAILTPLTDSKVISSYLPKE) are Cytoplasmic-facing. A helical membrane pass occupies residues 456–476 (AISGLVCLINCAVGMVFTMEA). The Extracellular portion of the chain corresponds to 477-489 (GNYWFDIFNDYAA). A helical membrane pass occupies residues 490–510 (TLSLLLIVLVETIAVCYVYGL). Residues 511–533 (RRFESDLRAMTGRPLNWYWKAMW) are Cytoplasmic-facing. A helical membrane pass occupies residues 534 to 554 (AFVSPLLIIGLFIFYLSDYIL). Residues 555-578 (TGTLQYQAWDATQGQLVTKDYPPH) lie on the Extracellular side of the membrane. Residues 579-599 (ALAVIGLLVASSTMCIPLVAL) traverse the membrane as a helical segment. Topologically, residues 600 to 616 (GTFIRNRLKRGGSSPVA) are cytoplasmic.

The protein belongs to the sodium:neurotransmitter symporter (SNF) (TC 2.A.22) family. SLC6A20 subfamily. Highly expressed in epithelial cells of duodenum, jejunum, ileum, stomach, cecum, colon and kidney proximal tubule. Also expressed in the choroid plexus, microglia and meniges of the brain and in the ovary.

It is found in the apical cell membrane. The catalysed reaction is L-proline(out) + chloride(out) + 2 Na(+)(out) = L-proline(in) + chloride(in) + 2 Na(+)(in). It carries out the reaction 4-hydroxy-L-proline(out) + chloride(out) + 2 Na(+)(out) = 4-hydroxy-L-proline(in) + chloride(in) + 2 Na(+)(in). It catalyses the reaction 2-methyl-2-(methylamino)propanoate(out) + chloride(out) + 2 Na(+)(out) = 2-methyl-2-(methylamino)propanoate(in) + chloride(in) + 2 Na(+)(in). The enzyme catalyses L-pipecolate(out) + chloride(out) + 2 Na(+)(out) = L-pipecolate(in) + chloride(in) + 2 Na(+)(in). The catalysed reaction is glycine betaine(out) + chloride(out) + 2 Na(+)(out) = glycine betaine(in) + chloride(in) + 2 Na(+)(in). It carries out the reaction glycine(out) + chloride(out) + 2 Na(+)(out) = glycine(in) + chloride(in) + 2 Na(+)(in). In terms of biological role, mediates the Na(+)- and Cl(-)-dependent uptake of imino acids such as L-proline, N-methyl-L-proline and pipecolate as well as N-methylated amino acids. Also transports glycine, regulates proline and glycine homeostasis in the brain playing a role in the modulation of NMDAR currents. The protein is Sodium- and chloride-dependent transporter XTRP3 of Rattus norvegicus (Rat).